Consider the following 212-residue polypeptide: Translation initiation factor IF-3 (212 aa).

The segment at 168–212 (MAPKAPASPKKDKADRPEGDAGDTDMAAPAPAPAAAPETESAPSA) is disordered. Residues 176–186 (PKKDKADRPEG) show a composition bias toward basic and acidic residues. A compositionally biased stretch (low complexity) spans 194–212 (AAPAPAPAAAPETESAPSA).

Belongs to the IF-3 family. As to quaternary structure, monomer.

The protein resides in the cytoplasm. In terms of biological role, IF-3 binds to the 30S ribosomal subunit and shifts the equilibrium between 70S ribosomes and their 50S and 30S subunits in favor of the free subunits, thus enhancing the availability of 30S subunits on which protein synthesis initiation begins. In Deinococcus radiodurans (strain ATCC 13939 / DSM 20539 / JCM 16871 / CCUG 27074 / LMG 4051 / NBRC 15346 / NCIMB 9279 / VKM B-1422 / R1), this protein is Translation initiation factor IF-3.